We begin with the raw amino-acid sequence, 445 residues long: Methionine aminopeptidase 2 (445 aa).

The disordered stretch occupies residues 1-80 (MAAQVASGVG…TSKVQTEPPR (80 aa)). A compositionally biased stretch (basic residues) spans 57–71 (AKKKKKKTKKKKKGT). His195 is a binding site for substrate. Asp215, Asp226, and His295 together coordinate a divalent metal cation. His303 lines the substrate pocket. Positions 331 and 426 each coordinate a divalent metal cation.

This sequence belongs to the peptidase M24A family. Methionine aminopeptidase eukaryotic type 2 subfamily. Co(2+) serves as cofactor. Requires Zn(2+) as cofactor. The cofactor is Mn(2+). It depends on Fe(2+) as a cofactor.

It localises to the cytoplasm. It carries out the reaction Release of N-terminal amino acids, preferentially methionine, from peptides and arylamides.. Functionally, cotranslationally removes the N-terminal methionine from nascent proteins. The N-terminal methionine is often cleaved when the second residue in the primary sequence is small and uncharged (Met-Ala-, Cys, Gly, Pro, Ser, Thr, or Val). The polypeptide is Methionine aminopeptidase 2 (Paracoccidioides brasiliensis (strain Pb03)).